The chain runs to 389 residues: Spore coat polysaccharide biosynthesis protein SpsC (389 aa).

Position 187 is an N6-(pyridoxal phosphate)lysine (Lys187).

It belongs to the DegT/DnrJ/EryC1 family. The cofactor is pyridoxal 5'-phosphate.

It functions in the pathway spore coat biogenesis; spore coat polysaccharide biosynthesis. In Bacillus subtilis (strain 168), this protein is Spore coat polysaccharide biosynthesis protein SpsC (spsC).